Reading from the N-terminus, the 781-residue chain is DNA translocase FtsK 2 (781 aa).

The next 4 helical transmembrane spans lie at Leu24–Leu44, Phe74–Leu94, Ala120–Ile140, and Gly170–Phe190. Residues His191–Glu781 are Cytoplasmic-facing. The 210-residue stretch at Gly414–Arg623 folds into the FtsK domain. Gly434–Val439 contacts ATP.

This sequence belongs to the FtsK/SpoIIIE/SftA family. Homohexamer. Forms a ring that surrounds DNA.

Its subcellular location is the cell inner membrane. Essential cell division protein that coordinates cell division and chromosome segregation. The N-terminus is involved in assembly of the cell-division machinery. The C-terminus functions as a DNA motor that moves dsDNA in an ATP-dependent manner towards the dif recombination site, which is located within the replication terminus region. Translocation stops specifically at Xer-dif sites, where FtsK interacts with the Xer recombinase, allowing activation of chromosome unlinking by recombination. FtsK orienting polar sequences (KOPS) guide the direction of DNA translocation. FtsK can remove proteins from DNA as it translocates, but translocation stops specifically at XerCD-dif site, thereby preventing removal of XerC and XerD from dif. This chain is DNA translocase FtsK 2 (ftsK2), found in Ralstonia nicotianae (strain ATCC BAA-1114 / GMI1000) (Ralstonia solanacearum).